The following is a 180-amino-acid chain: Homeobox protein ceh-12 (180 aa).

Residues 15–37 (SSQNEDQKLESHPSPPSQIPNYS) form a disordered region. Positions 110 to 169 (MRRPRTAFSSEQLVQLEKQFSDNRYLSRPRRYQLAQQLSLSETQIKIWFQNRRMKNKRCP) form a DNA-binding region, homeobox.

As to expression, expressed in VB motor neurons in the ventral nerve cord.

It localises to the nucleus. Its function is as follows. Transcription factor. Plays a role, downstream from homeobox protein unc-4 and Wnt signaling, in specifying synaptic inputs to A-class motor neurons. Involved in patterning of the synaptic outputs of the postmitotic DA class cholinergic motor neurons. The sequence is that of Homeobox protein ceh-12 (ceh-12) from Caenorhabditis elegans.